The primary structure comprises 85 residues: Small ribosomal subunit protein bS20 (85 aa).

It belongs to the bacterial ribosomal protein bS20 family.

Its function is as follows. Binds directly to 16S ribosomal RNA. This Borreliella afzelii (strain PKo) (Borrelia afzelii) protein is Small ribosomal subunit protein bS20.